The primary structure comprises 481 residues: U6 small nuclear RNA (adenine-(43)-N(6))-methyltransferase (481 aa).

Residues K82, G108, D131, T164, and N184 each contribute to the S-adenosyl-L-methionine site.

This sequence belongs to the methyltransferase superfamily. METTL16/RlmF family. As to quaternary structure, self-associates. Interacts with dlc-1; the interaction is direct, and is required for nuclear localization of mett-10.

The protein resides in the nucleus. The catalysed reaction is an adenosine in mRNA + S-adenosyl-L-methionine = an N(6)-methyladenosine in mRNA + S-adenosyl-L-homocysteine + H(+). It catalyses the reaction adenosine in U6 snRNA + S-adenosyl-L-methionine = N(6)-methyladenosine in U6 snRNA + S-adenosyl-L-homocysteine + H(+). Functionally, RNA N6-methyltransferase that methylates adenosine residues at the N(6) position of a subset of RNAs and is involved in S-adenosyl-L-methionine homeostasis by regulating splicing of S-adenosylmethionine synthase transcripts (sams-3, sams-4 and sams-5). Able to N6-methylate a subset of mRNAs containing the 5'UACAGAAAC-3' nonamer sequence. Plays a key role in S-adenosyl-L-methionine homeostasis: under rich-diet conditions, catalyzes N6-methylation of S-adenosylmethionine synthase mRNAs (sams-3, sams-4 and sams-5), directly inhibiting splicing and protein production of S-adenosylmethionine synthase. In addition to mRNAs, also able to mediate N6-methylation of U6 small nuclear RNA (U6 snRNA). Required for gamete production, inhibiting germ cell proliferative fate and ensuring germ cell meiotic development. Also promotes progression of the mitotic cell cycle in those germ cells that continue to proliferate. Plays a role in the development of the vulva, somatic gonad and embryo. This chain is U6 small nuclear RNA (adenine-(43)-N(6))-methyltransferase, found in Caenorhabditis briggsae.